A 370-amino-acid polypeptide reads, in one-letter code: D-alanine--D-alanine ligase (370 aa).

The 209-residue stretch at 144–352 (KKIFADAGIP…YGALIERLVD (209 aa)) folds into the ATP-grasp domain. ATP is bound at residue 177-232 (EEVLTYPVFVKPANLGSSVGISKATNKTELIEAMTEAFLYDRRVVVEQGVVAREIE). Mg(2+) is bound by residues D306, E319, and N321.

The protein belongs to the D-alanine--D-alanine ligase family. Requires Mg(2+) as cofactor. Mn(2+) is required as a cofactor.

The protein localises to the cytoplasm. It catalyses the reaction 2 D-alanine + ATP = D-alanyl-D-alanine + ADP + phosphate + H(+). Its pathway is cell wall biogenesis; peptidoglycan biosynthesis. In terms of biological role, cell wall formation. In Listeria innocua serovar 6a (strain ATCC BAA-680 / CLIP 11262), this protein is D-alanine--D-alanine ligase.